The following is a 150-amino-acid chain: UPF0506 protein SJCHGC03144 (150 aa).

A signal peptide spans 1 to 18; the sequence is MNTCIQLLILCLVTVINS. N-linked (GlcNAc...) asparagine glycans are attached at residues Asn-20, Asn-36, Asn-52, and Asn-110. 3 cysteine pairs are disulfide-bonded: Cys-116–Cys-130, Cys-123–Cys-134, and Cys-129–Cys-139.

It belongs to the UPF0506 family.

It localises to the secreted. In Schistosoma japonicum (Blood fluke), this protein is UPF0506 protein SJCHGC03144.